The following is a 181-amino-acid chain: Adenine phosphoribosyltransferase (181 aa).

It belongs to the purine/pyrimidine phosphoribosyltransferase family. As to quaternary structure, homodimer.

It is found in the cytoplasm. It catalyses the reaction AMP + diphosphate = 5-phospho-alpha-D-ribose 1-diphosphate + adenine. It participates in purine metabolism; AMP biosynthesis via salvage pathway; AMP from adenine: step 1/1. Its function is as follows. Catalyzes a salvage reaction resulting in the formation of AMP, that is energically less costly than de novo synthesis. The sequence is that of Adenine phosphoribosyltransferase from Vibrio parahaemolyticus serotype O3:K6 (strain RIMD 2210633).